Consider the following 312-residue polypeptide: Olfactory receptor 5p57 (312 aa).

Over 1–25 the chain is Extracellular; the sequence is MEPGNYTVVTEFILLGLTDDITVSV. N-linked (GlcNAc...) asparagine glycosylation occurs at asparagine 5. The chain crosses the membrane as a helical span at residues 26 to 46; sequence ILFVMFLIVYSVTLMGNLNII. At 47 to 54 the chain is on the cytoplasmic side; the sequence is VLIRTSPQ. A helical transmembrane segment spans residues 55–75; it reads LHTPMYLFLSHLAFLDIGYSS. The Extracellular portion of the chain corresponds to 76-99; sequence SVTPIMLRGFLRKGTFIPVAGCVA. Cysteine 97 and cysteine 189 are joined by a disulfide. A helical transmembrane segment spans residues 100-120; that stretch reads QLCIVVAFGTSESFLLASMAY. Residues 121–133 are Cytoplasmic-facing; it reads DRYVAICSPLLYS. Residues 134-154 form a helical membrane-spanning segment; sequence TQMSSTVCILLVGTSYLGGWV. At 155 to 196 the chain is on the extracellular side; it reads NAWIFTGCSLNLSFCGPNKINHFFCDYSPLLKLSCSHDFSFE. Asparagine 165 carries an N-linked (GlcNAc...) asparagine glycan. A helical transmembrane segment spans residues 197 to 217; it reads VIPAISSGSIIVVTVFIIALS. At 218 to 237 the chain is on the cytoplasmic side; the sequence is YVYILVSILKMRSTEGRQKA. Residues 238-258 form a helical membrane-spanning segment; sequence FSTCTSHLTAVTLFFGTITFI. The Extracellular segment spans residues 259 to 271; sequence YVMPQSSYSTDQN. The chain crosses the membrane as a helical span at residues 272 to 292; it reads KVVSVFYTVVIPMLNPLIYSF. Residues 293–312 lie on the Cytoplasmic side of the membrane; sequence RNKEVKEAMKKLIAKTHWWS.

The protein belongs to the G-protein coupled receptor 1 family.

It is found in the cell membrane. Functionally, probable odorant receptor, which recognizes only aliphatic alcohols, suggesting that it may convey a 'woody' or 'sweet' sour. The sequence is that of Olfactory receptor 5p57 from Mus musculus (Mouse).